Here is a 335-residue protein sequence, read N- to C-terminus: Tryptophan--tRNA ligase (335 aa).

ATP contacts are provided by residues 19-21 (QPS) and 28-29 (GN). Residues 20–29 (PSSGMLHLGN) carry the 'HIGH' region motif. L-tryptophan is bound at residue D143. ATP-binding positions include 155 to 157 (GAD), I192, and 201 to 205 (KMSKS). The short motif at 201–205 (KMSKS) is the 'KMSKS' region element.

Belongs to the class-I aminoacyl-tRNA synthetase family. In terms of assembly, homodimer.

It localises to the cytoplasm. The enzyme catalyses tRNA(Trp) + L-tryptophan + ATP = L-tryptophyl-tRNA(Trp) + AMP + diphosphate + H(+). Its function is as follows. Catalyzes the attachment of tryptophan to tRNA(Trp). This chain is Tryptophan--tRNA ligase, found in Tropheryma whipplei (strain Twist) (Whipple's bacillus).